A 234-amino-acid chain; its full sequence is 2-amino-5-formylamino-6-ribosylaminopyrimidin-4(3H)-one 5'-monophosphate deformylase (234 aa).

Fe cation is bound by residues glutamate 30, histidine 32, aspartate 41, and histidine 111.

Belongs to the creatininase superfamily. FAPy deformylase family. As to quaternary structure, homodimer. Fe(2+) is required as a cofactor. It depends on Zn(2+) as a cofactor.

The catalysed reaction is 2-amino-5-formylamino-6-(5-phospho-D-ribosylamino)pyrimidin-4(3H)-one + H2O = 2,5-diamino-6-(1-D-ribosylamino)pyrimidin-4(3H)-one 5'-phosphate + formate + H(+). The protein operates within cofactor biosynthesis; coenzyme F420 biosynthesis. It participates in cofactor biosynthesis; riboflavin biosynthesis. Functionally, catalyzes the hydrolysis of the formamide of 2-amino-5-formylamino-6-ribosylamino-4(3H)-pyrimidinone 5'-monophosphate (FAPy) to form 2,5-diamino-6-ribosylamino-4(3H)-pyrimidinone 5'-phosphate (APy). This Methanothermobacter thermautotrophicus (strain ATCC 29096 / DSM 1053 / JCM 10044 / NBRC 100330 / Delta H) (Methanobacterium thermoautotrophicum) protein is 2-amino-5-formylamino-6-ribosylaminopyrimidin-4(3H)-one 5'-monophosphate deformylase.